A 613-amino-acid chain; its full sequence is Apoptosis-inducing factor 1, mitochondrial (613 aa).

2 consecutive short sequence motifs (mitochondrial localization signal) follow at residues 1 to 31 and 63 to 89; these read MFRCGGLAAGALKQKLVPLVRTVCVRSPRQR and KIDNSVLVLIVGLSTVGAGAYAYKTMK. The transit peptide at 1–54 directs the protein to the mitochondrion; it reads MFRCGGLAAGALKQKLVPLVRTVCVRSPRQRNRLPGNLFQRWHVPLELQMTRQM. The propeptide at 55–101 is removed in mature form; it reads ASSGASGGKIDNSVLVLIVGLSTVGAGAYAYKTMKEDEKRYNERISG. The interval 100 to 127 is disordered; the sequence is SGLGLTPEQKQKKAALSASEGEEVPQDK. Threonine 105 carries the phosphothreonine modification. Residue lysine 109 is modified to N6-succinyllysine. A phosphoserine mark is found at serine 116 and serine 118. The interval 134–483 is FAD-dependent oxidoreductase; that stretch reads FLLIGGGTAA…KPYWHQSMFW (350 aa). Residues 138–142, 164–165, arginine 172, and lysine 177 each bind FAD; these read GGGTA and ED. Residue tryptophan 196 participates in NAD(+) binding. Valine 233 lines the FAD pocket. A Glycyl lysine isopeptide (Lys-Gly) (interchain with G-Cter in ubiquitin) cross-link involves residue lysine 255. Serine 268 carries the post-translational modification Phosphoserine. Arginine 285 lines the FAD pocket. A Phosphoserine modification is found at serine 292. NAD(+)-binding positions include 308–311, glutamate 336, and lysine 342; that span reads GGFL. Phosphoserine is present on serine 371. Residue lysine 388 is modified to N6-acetyllysine. Position 399 (glycine 399) interacts with NAD(+). Aspartate 438 is an FAD binding site. Residues 446–451 carry the Nuclear localization signal motif; that stretch reads KLGRRR. NAD(+) is bound by residues 453–454, tryptophan 483, and glutamate 493; that span reads EH. FAD is bound by residues 454–455 and tryptophan 483; that span reads HH. The segment covering 513 to 529 has biased composition (polar residues); that stretch reads AQDNPKSATEQSGTGIR. The disordered stretch occupies residues 513–554; sequence AQDNPKSATEQSGTGIRSESETESEASEITIPPSTPAVPQAP. Residue threonine 521 is modified to Phosphothreonine. Residues serine 524 and serine 530 each carry the phosphoserine modification. An NAD(+)-binding site is contributed by asparagine 583. An N6-acetyllysine modification is found at lysine 593.

The protein belongs to the FAD-dependent oxidoreductase family. As to quaternary structure, monomer (oxidized form). Homodimer (reduced form). Upon reduction with NADH, undergoes dimerization and forms tight, long-lived FADH2-NAD charge transfer complexes (CTC) resistant to oxidation. Also dimerizes with isoform 3 preventing its release from mitochondria. Interacts with XIAP/BIRC4. Interacts (via N-terminus) with EIF3G (via C-terminus). Interacts with PRELID1. Interacts with CHCHD4; the interaction increases in presence of NADH. Interacts with processed form of PARP1 (Poly [ADP-ribose] polymerase 1, processed C-terminus); interaction is mediated with poly-ADP-ribose chains attached to PARP1, promoting translocation into the nucleus. FAD is required as a cofactor. In terms of processing, under normal conditions, a 54-residue N-terminal segment is first proteolytically removed during or just after translocation into the mitochondrial intermembrane space (IMS) by the mitochondrial processing peptidase (MPP) to form the inner-membrane-anchored mature form (AIFmit). During apoptosis, it is further proteolytically processed at amino-acid position 101 leading to the generation of the mature form, which is confined to the mitochondrial IMS in a soluble form (AIFsol). AIFsol is released to the cytoplasm in response to specific death signals, and translocated to the nucleus, where it induces nuclear apoptosis in a caspase-independent manner. Post-translationally, ubiquitination by XIAP/BIRC4 does not lead to proteasomal degradation. Ubiquitination at Lys-255 by XIAP/BIRC4 blocks its ability to bind DNA and induce chromatin degradation, thereby inhibiting its ability to induce cell death. As to expression, expressed in all tested tissues. Detected in muscle and skin fibroblasts (at protein level). Expressed in osteoblasts (at protein level). Brain specific. In terms of tissue distribution, expressed in all tested tissues except brain. As to expression, isoform 5 is frequently down-regulated in human cancers.

The protein resides in the mitochondrion intermembrane space. The protein localises to the mitochondrion inner membrane. Its subcellular location is the cytoplasm. It is found in the nucleus. It localises to the perinuclear region. The protein resides in the mitochondrion. The protein localises to the cytosol. The catalysed reaction is A + NADH + H(+) = AH2 + NAD(+). Functions both as NADH oxidoreductase and as regulator of apoptosis. In response to apoptotic stimuli, it is released from the mitochondrion intermembrane space into the cytosol and to the nucleus, where it functions as a proapoptotic factor in a caspase-independent pathway. Release into the cytoplasm is mediated upon binding to poly-ADP-ribose chains. The soluble form (AIFsol) found in the nucleus induces 'parthanatos' i.e. caspase-independent fragmentation of chromosomal DNA. Binds to DNA in a sequence-independent manner. Interacts with EIF3G, and thereby inhibits the EIF3 machinery and protein synthesis, and activates caspase-7 to amplify apoptosis. Plays a critical role in caspase-independent, pyknotic cell death in hydrogen peroxide-exposed cells. In contrast, participates in normal mitochondrial metabolism. Plays an important role in the regulation of respiratory chain biogenesis by interacting with CHCHD4 and controlling CHCHD4 mitochondrial import. Functionally, has NADH oxidoreductase activity. Does not induce nuclear apoptosis. Its function is as follows. Pro-apoptotic isoform. The chain is Apoptosis-inducing factor 1, mitochondrial from Homo sapiens (Human).